Consider the following 300-residue polypeptide: Cation-efflux pump FieF (300 aa).

4 helical membrane passes run 11–31 (LAAV…VFAW), 40–60 (LASL…LLVV), 81–101 (LAAL…ILTG), and 114–134 (PEVG…LVSF). Zn(2+)-binding residues include Asp-45 and Asp-49. The Zn(2+) site is built by His-153 and Asp-157. 2 consecutive transmembrane segments (helical) span residues 156-176 (SDLL…KGIT) and 182-202 (FALG…YDAV).

It belongs to the cation diffusion facilitator (CDF) transporter (TC 2.A.4) family. FieF subfamily. As to quaternary structure, homodimer.

It localises to the cell inner membrane. The catalysed reaction is Zn(2+)(in) + H(+)(out) = Zn(2+)(out) + H(+)(in). It catalyses the reaction Cd(2+)(in) + H(+)(out) = Cd(2+)(out) + H(+)(in). The enzyme catalyses Fe(2+)(in) + H(+)(out) = Fe(2+)(out) + H(+)(in). Its function is as follows. Divalent metal cation transporter which exports Zn(2+), Cd(2+) and possibly Fe(2+). May be involved in zinc and iron detoxification by efflux. This chain is Cation-efflux pump FieF, found in Pectobacterium atrosepticum (strain SCRI 1043 / ATCC BAA-672) (Erwinia carotovora subsp. atroseptica).